The sequence spans 152 residues: Urease accessory protein UreE (152 aa).

Belongs to the UreE family.

The protein localises to the cytoplasm. Involved in urease metallocenter assembly. Binds nickel. Probably functions as a nickel donor during metallocenter assembly. This Citrobacter koseri (strain ATCC BAA-895 / CDC 4225-83 / SGSC4696) protein is Urease accessory protein UreE.